Consider the following 892-residue polypeptide: Integrator complex subunit 6 (892 aa).

Residues 3–227 (ILLFLIDTSA…QCLESLVQKV (225 aa)) form the VWFA domain. The Inhibitory loop signature appears at 630–637 (MMIDEADE). 3 disordered regions span residues 665–692 (MSPLLRRPQTPPIITNHVLGKGPTGTQG), 711–754 (VGGT…AAPD), and 771–793 (PDHTQNCEELSPPGQEGEMEVNE).

It belongs to the Integrator subunit 6 family. Component of the Integrator complex, composed of core subunits INTS1, INTS2, INTS3, INTS4, INTS5, INTS6, INTS7, INTS8, INTS9/RC74, INTS10, INTS11/CPSF3L, INTS12, INTS13, INTS14 and INTS15. The core complex associates with protein phosphatase 2A subunits PPP2CA and PPP2R1A, to form the Integrator-PP2A (INTAC) complex.

The protein localises to the nucleus. Its subcellular location is the chromosome. Functionally, component of the integrator complex, a multiprotein complex that terminates RNA polymerase II (Pol II) transcription in the promoter-proximal region of genes. The integrator complex provides a quality checkpoint during transcription elongation by driving premature transcription termination of transcripts that are unfavorably configured for transcriptional elongation: the complex terminates transcription by (1) catalyzing dephosphorylation of the C-terminal domain (CTD) of Pol II subunit POLR2A/RPB1 and SUPT5H/SPT5, (2) degrading the exiting nascent RNA transcript via endonuclease activity and (3) promoting the release of Pol II from bound DNA. The integrator complex is also involved in terminating the synthesis of non-coding Pol II transcripts, such as enhancer RNAs (eRNAs), small nuclear RNAs (snRNAs), telomerase RNAs and long non-coding RNAs (lncRNAs). Within the integrator complex, INTS6 acts as a molecular adapter that promotes assembly of protein phosphatase 2A (PP2A) subunits to the integrator core complex, promoting recruitment of PP2A to transcription pause-release checkpoint. The protein is Integrator complex subunit 6 (ints6l) of Danio rerio (Zebrafish).